A 435-amino-acid chain; its full sequence is Probable exopolygalacturonase B (435 aa).

The N-terminal stretch at 1 to 15 (MKFFLATLFASAVSS) is a signal peptide. N-linked (GlcNAc...) asparagine glycans are attached at residues asparagine 59, asparagine 184, and asparagine 224. PbH1 repeat units follow at residues 208-239 (SKDV…DSLN), 240-261 (VDGL…SPKP), 262-283 (NTTN…SMGS), 294-315 (IEHA…RLKA), and 326-347 (INNI…VLDQ). Aspartate 254 serves as the catalytic Proton donor. Cysteine 256 and cysteine 273 are oxidised to a cystine. N-linked (GlcNAc...) asparagine glycans are attached at residues asparagine 262 and asparagine 274. Histidine 277 is an active-site residue. Residues asparagine 301, asparagine 328, asparagine 365, and asparagine 373 are each glycosylated (N-linked (GlcNAc...) asparagine). The PbH1 6 repeat unit spans residues 366–388 (VTNILFENISGTSSGKNGKVVAD). Cysteines 391 and 397 form a disulfide. N-linked (GlcNAc...) asparagine glycosylation occurs at asparagine 406.

It belongs to the glycosyl hydrolase 28 family.

The protein localises to the secreted. It catalyses the reaction [(1-&gt;4)-alpha-D-galacturonosyl](n) + H2O = alpha-D-galacturonate + [(1-&gt;4)-alpha-D-galacturonosyl](n-1). Functionally, specific in hydrolyzing the terminal glycosidic bond of polygalacturonic acid and oligogalacturonates. The sequence is that of Probable exopolygalacturonase B (pgxB) from Aspergillus flavus (strain ATCC 200026 / FGSC A1120 / IAM 13836 / NRRL 3357 / JCM 12722 / SRRC 167).